A 172-amino-acid chain; its full sequence is uncharacterized protein (172 aa).

The HTH cro/C1-type domain occupies 21-75; it reads FKRILLELGLTLKEFSEISGIPYSTLYKVIQGKDFRVSTLIKILKTIRSFEKDEN. Positions 32-51 form a DNA-binding region, H-T-H motif; it reads LKEFSEISGIPYSTLYKVIQ.

This is an uncharacterized protein from Methanocaldococcus jannaschii (strain ATCC 43067 / DSM 2661 / JAL-1 / JCM 10045 / NBRC 100440) (Methanococcus jannaschii).